The chain runs to 778 residues: Putative ATP-dependent RNA helicase MJ1505 (778 aa).

The region spanning 22–186 (IAANALKKKT…EICENLGIEH (165 aa)) is the Helicase ATP-binding domain. ATP is bound at residue 35-42 (LSTGLGKT). The short motif at 137–140 (DEAH) is the DEAH box element. One can recognise a Helicase C-terminal domain in the interval 338–516 (KVVDMVKNIL…EIKEETEEIK (179 aa)).

This sequence belongs to the DEAD box helicase family. DEAH subfamily.

The catalysed reaction is ATP + H2O = ADP + phosphate + H(+). The protein is Putative ATP-dependent RNA helicase MJ1505 of Methanocaldococcus jannaschii (strain ATCC 43067 / DSM 2661 / JAL-1 / JCM 10045 / NBRC 100440) (Methanococcus jannaschii).